Reading from the N-terminus, the 363-residue chain is tRNA N6-adenosine threonylcarbamoyltransferase (363 aa).

Fe cation contacts are provided by H121 and H125. Substrate is bound by residues 143–147 (LASGG), D176, G189, and N287. D315 contacts Fe cation.

This sequence belongs to the KAE1 / TsaD family. Fe(2+) is required as a cofactor.

It is found in the cytoplasm. The catalysed reaction is L-threonylcarbamoyladenylate + adenosine(37) in tRNA = N(6)-L-threonylcarbamoyladenosine(37) in tRNA + AMP + H(+). Functionally, required for the formation of a threonylcarbamoyl group on adenosine at position 37 (t(6)A37) in tRNAs that read codons beginning with adenine. Is involved in the transfer of the threonylcarbamoyl moiety of threonylcarbamoyl-AMP (TC-AMP) to the N6 group of A37, together with TsaE and TsaB. TsaD likely plays a direct catalytic role in this reaction. This is tRNA N6-adenosine threonylcarbamoyltransferase from Rhodopseudomonas palustris (strain BisB5).